Consider the following 209-residue polypeptide: Shikimate kinase (209 aa).

47–52 is a binding site for ATP; the sequence is GAGKTT. A Mg(2+)-binding site is contributed by Thr51. 3 residues coordinate substrate: Asp69, Arg93, and Gly115. Arg153 contributes to the ATP binding site. A substrate-binding site is contributed by Arg172.

The protein belongs to the shikimate kinase family. As to quaternary structure, monomer. Mg(2+) serves as cofactor.

The protein localises to the cytoplasm. It carries out the reaction shikimate + ATP = 3-phosphoshikimate + ADP + H(+). Its pathway is metabolic intermediate biosynthesis; chorismate biosynthesis; chorismate from D-erythrose 4-phosphate and phosphoenolpyruvate: step 5/7. Its function is as follows. Catalyzes the specific phosphorylation of the 3-hydroxyl group of shikimic acid using ATP as a cosubstrate. The sequence is that of Shikimate kinase from Bordetella avium (strain 197N).